The chain runs to 158 residues: Ribonuclease H (158 aa).

The RNase H type-1 domain maps to 5–146; that stretch reads MRKQIEIFTD…CDQLAKQGAE (142 aa). Mg(2+)-binding residues include Asp14, Glu52, Asp74, and Asp138.

Belongs to the RNase H family. In terms of assembly, monomer. The cofactor is Mg(2+).

The protein resides in the cytoplasm. The catalysed reaction is Endonucleolytic cleavage to 5'-phosphomonoester.. Endonuclease that specifically degrades the RNA of RNA-DNA hybrids. In Mannheimia succiniciproducens (strain KCTC 0769BP / MBEL55E), this protein is Ribonuclease H.